A 294-amino-acid polypeptide reads, in one-letter code: Lipoprotein NlpI (294 aa).

An N-terminal signal peptide occupies residues 1 to 18 (MKPFLRWCFVATALTLAG). A lipid anchor (N-palmitoyl cysteine) is attached at Cys-19. The S-diacylglycerol cysteine moiety is linked to residue Cys-19. TPR repeat units lie at residues 62 to 95 (AQLL…RPDM), 96 to 129 (PEVF…DPTY), and 234 to 267 (SETN…NVHN).

Homodimer.

It is found in the cell membrane. In terms of biological role, may be involved in cell division. May play a role in bacterial septation or regulation of cell wall degradation during cell division. In Escherichia coli O157:H7, this protein is Lipoprotein NlpI (nlpI).